The sequence spans 909 residues: E3 ubiquitin-protein ligase HACE1 (909 aa).

The interval M1–V21 is N-terminal helix important for homodimerization. 7 ANK repeats span residues L23–F55, V64–Y93, S97–I126, E130–V159, M163–R192, S196–D226, and N228–P253. Residues Q398–G433 form a disordered region. An HECT domain is found at N574–A909. C876 acts as the Glycyl thioester intermediate in catalysis.

Homodimer. The homodimer is autoinhibited and stabilized by its N-terminal helix. Interacts with RAB1 (RAB1A, RAB1B or RAB1C), RAB4 (RAB4A or RAB4B) and RAB11 (RAB11A or RAB11B); in a GTP-dependent manner. Interacts with the 26S proteasomal complex through the 20S core proteasomal subunit. Interacts with RARB. In terms of processing, autoubiquitinated.

The protein localises to the golgi apparatus. Its subcellular location is the golgi stack membrane. It localises to the cytoplasm. It is found in the endoplasmic reticulum. It catalyses the reaction S-ubiquitinyl-[E2 ubiquitin-conjugating enzyme]-L-cysteine + [acceptor protein]-L-lysine = [E2 ubiquitin-conjugating enzyme]-L-cysteine + N(6)-ubiquitinyl-[acceptor protein]-L-lysine.. It participates in protein modification; protein ubiquitination. Sterically autoinhibited in its dimeric state. Its function is as follows. E3 ubiquitin-protein ligase involved in Golgi membrane fusion and regulation of small GTPases. Acts as a regulator of Golgi membrane dynamics during the cell cycle: recruited to Golgi membrane by Rab proteins and regulates postmitotic Golgi membrane fusion. Acts by mediating ubiquitination during mitotic Golgi disassembly, ubiquitination serving as a signal for Golgi reassembly later, after cell division. Specifically binds GTP-bound RAC1, mediating ubiquitination and subsequent degradation of active RAC1, thereby playing a role in host defense against pathogens. May also act as a transcription regulator via its interaction with RARB. This is E3 ubiquitin-protein ligase HACE1 (Hace1) from Mus musculus (Mouse).